A 392-amino-acid polypeptide reads, in one-letter code: Formate-dependent phosphoribosylglycinamide formyltransferase (392 aa).

N(1)-(5-phospho-beta-D-ribosyl)glycinamide is bound by residues 22–23 (EL) and Glu82. Residues Arg114, Lys155, 160–165 (SSGKGQ), 195–198 (EGVV), and Glu203 contribute to the ATP site. The ATP-grasp domain maps to 119–308 (RLAAEELQLP…EFALHVRAFL (190 aa)). Glu267 and Glu279 together coordinate Mg(2+). N(1)-(5-phospho-beta-D-ribosyl)glycinamide is bound by residues Asp286, Lys355, and 362–363 (RR).

This sequence belongs to the PurK/PurT family. As to quaternary structure, homodimer.

It carries out the reaction N(1)-(5-phospho-beta-D-ribosyl)glycinamide + formate + ATP = N(2)-formyl-N(1)-(5-phospho-beta-D-ribosyl)glycinamide + ADP + phosphate + H(+). It functions in the pathway purine metabolism; IMP biosynthesis via de novo pathway; N(2)-formyl-N(1)-(5-phospho-D-ribosyl)glycinamide from N(1)-(5-phospho-D-ribosyl)glycinamide (formate route): step 1/1. Involved in the de novo purine biosynthesis. Catalyzes the transfer of formate to 5-phospho-ribosyl-glycinamide (GAR), producing 5-phospho-ribosyl-N-formylglycinamide (FGAR). Formate is provided by PurU via hydrolysis of 10-formyl-tetrahydrofolate. The sequence is that of Formate-dependent phosphoribosylglycinamide formyltransferase from Escherichia coli O157:H7.